A 407-amino-acid polypeptide reads, in one-letter code: Multifunctional CCA protein (407 aa).

ATP-binding residues include glycine 8 and arginine 11. Glycine 8 and arginine 11 together coordinate CTP. Positions 21 and 23 each coordinate Mg(2+). ATP is bound by residues arginine 91, arginine 137, and arginine 140. CTP contacts are provided by arginine 91, arginine 137, and arginine 140. Positions 228-329 constitute an HD domain; the sequence is TGIHTLLVAE…VKIFNKLDVW (102 aa).

The protein belongs to the tRNA nucleotidyltransferase/poly(A) polymerase family. Bacterial CCA-adding enzyme type 1 subfamily. As to quaternary structure, monomer. Can also form homodimers and oligomers. Mg(2+) is required as a cofactor. Ni(2+) serves as cofactor.

It carries out the reaction a tRNA precursor + 2 CTP + ATP = a tRNA with a 3' CCA end + 3 diphosphate. The catalysed reaction is a tRNA with a 3' CCA end + 2 CTP + ATP = a tRNA with a 3' CCACCA end + 3 diphosphate. Catalyzes the addition and repair of the essential 3'-terminal CCA sequence in tRNAs without using a nucleic acid template. Adds these three nucleotides in the order of C, C, and A to the tRNA nucleotide-73, using CTP and ATP as substrates and producing inorganic pyrophosphate. tRNA 3'-terminal CCA addition is required both for tRNA processing and repair. Also involved in tRNA surveillance by mediating tandem CCA addition to generate a CCACCA at the 3' terminus of unstable tRNAs. While stable tRNAs receive only 3'-terminal CCA, unstable tRNAs are marked with CCACCA and rapidly degraded. The protein is Multifunctional CCA protein of Vibrio vulnificus (strain YJ016).